The following is a 218-amino-acid chain: Small ribosomal subunit protein uS3 (218 aa).

In terms of domain architecture, KH type-2 spans 38-106; the sequence is LRSDLKKKLM…PVHLNIEEVK (69 aa).

The protein belongs to the universal ribosomal protein uS3 family. In terms of assembly, part of the 30S ribosomal subunit. Forms a tight complex with proteins S10 and S14.

Binds the lower part of the 30S subunit head. Binds mRNA in the 70S ribosome, positioning it for translation. This is Small ribosomal subunit protein uS3 from Legionella pneumophila (strain Lens).